The primary structure comprises 580 residues: Small conductance calcium-activated potassium channel protein 2 (580 aa).

Disordered stretches follow at residues 1–68 (MSSC…VSKP) and 88–116 (GGGG…KKNQ). Over residues 48-61 (SSPSAAAAASSSAP) the composition is skewed to low complexity. Over residues 88–104 (GGGGGGGGGGGGSGHGS) the composition is skewed to gly residues. A helical transmembrane segment spans residues 140 to 160 (LIFGMFGIVVMVIETELSWGA). At Tyr-161 the chain carries Phosphotyrosine. Residues 169–189 (LALKCLISLSTIILLGLIIVY) form a helical membrane-spanning segment. The helical transmembrane segment at 215–235 (IFFICLEILVCAIHPIPGNYT) threads the bilayer. Residues 257–277 (IILSIPMFLRLYLIARVMLLH) traverse the membrane as a helical segment. Residues 306–326 (LMTICPGTVLLVFSISLWIIA) form a helical membrane-spanning segment. The pore-forming intramembrane region spans 346–366 (FLGAMWLISITFLSIGYGDMV). The chain crosses the membrane as a helical span at residues 375–395 (VCLLTGIMGAGCTALVVAVVA). The calmodulin-binding stretch occupies residues 413–489 (DTQLTKRVKN…LVDLAKTQNI (77 aa)). Residues 551-560 (HVTYNAERSR) show a composition bias toward basic and acidic residues. The interval 551–580 (HVTYNAERSRSSSRRRRSSSTAPPTSSESS) is disordered. A compositionally biased stretch (low complexity) spans 569–580 (SSTAPPTSSESS).

This sequence belongs to the potassium channel KCNN family. KCa2.2/KCNN2 subfamily. Homodimer. Heteromultimer with KCNN1 and KCNN3. The complex is composed of 4 channel subunits each of which binds to a calmodulin subunit which regulates the channel activity through calcium-binding. Interacts (via N-terminal domain) with MPP2. In terms of tissue distribution, brain.

The protein localises to the membrane. It is found in the cytoplasm. Its subcellular location is the myofibril. The protein resides in the sarcomere. It localises to the z line. The catalysed reaction is K(+)(in) = K(+)(out). Its activity is regulated as follows. Inhibited by bee venom neurotoxin apamin. Inhibited by UCL 1684 and tetraethylammonium (TEA). Functionally, small conductance calcium-activated potassium channel that mediates the voltage-independent transmembrane transfer of potassium across the cell membrane through a constitutive interaction with calmodulin which binds the intracellular calcium allowing its opening. The current is characterized by a voltage-independent activation, an intracellular calcium concentration increase-dependent activation and a single-channel conductance of about 3 picosiemens. Also presents an inwardly rectifying current, thus reducing its already small outward conductance of potassium ions, which is particularly the case when the membrane potential displays positive values, above + 20 mV. The inward rectification could be due to a blockade of the outward current by intracellular divalent cations such as calcium and magnesium and could also be due to an intrinsic property of the channel pore, independent of intracellular divalent ions. There are three positively charged amino acids in the S6 transmembrane domain, close to the pore, that collectively control the conductance and rectification through an electrostatic mechanism. Additionally, electrostatic contributions from these residues also play an important role in determining the intrinsic open probability of the channel in the absence of calcium, affecting the apparent calcium affinity for activation. Forms an heteromeric complex with calmodulin, which is constitutively associated in a calcium-independent manner. Channel opening is triggered when calcium binds the calmodulin resulting in a rotary movement leading to the formation of the dimeric complex to open the gate. Plays a role in the repolarization phase of cardiac action potential. The protein is Small conductance calcium-activated potassium channel protein 2 of Rattus norvegicus (Rat).